A 303-amino-acid polypeptide reads, in one-letter code: Protein UL24 homolog (303 aa).

The span at 235–249 (KFRDRTNKKSNDQLR) shows a compositional bias: basic and acidic residues. The tract at residues 235 to 280 (KFRDRTNKKSNDQLRARQANARPCKKKQHNNKRLRNNRKHGGKVSR) is disordered. Residues 257–277 (PCKKKQHNNKRLRNNRKHGGK) are compositionally biased toward basic residues.

Belongs to the herpesviridae UL24 family.

Its subcellular location is the virion. It localises to the host cytoplasm. The protein localises to the host nucleus. The protein resides in the host nucleolus. It is found in the host Golgi apparatus. May participate in nuclear egress of viral particles. Plays a role in the dispersal of several host nucleolar proteins including NCL/nucleolin and NPM1. Since deletion of host NCL/nucleolin negatively impact on nuclear egress, UL24 supposedly acts on this process through its effect on host nucleoli. The protein is Protein UL24 homolog (20) of Saimiri sciureus (Common squirrel monkey).